A 202-amino-acid chain; its full sequence is Glycerol-3-phosphate acyltransferase (202 aa).

6 consecutive transmembrane segments (helical) span residues N3 to A23, I61 to L81, L87 to F107, G118 to I138, I144 to N164, and L167 to L187.

The protein belongs to the PlsY family. In terms of assembly, probably interacts with PlsX.

The protein localises to the cell inner membrane. The enzyme catalyses an acyl phosphate + sn-glycerol 3-phosphate = a 1-acyl-sn-glycero-3-phosphate + phosphate. It functions in the pathway lipid metabolism; phospholipid metabolism. Functionally, catalyzes the transfer of an acyl group from acyl-phosphate (acyl-PO(4)) to glycerol-3-phosphate (G3P) to form lysophosphatidic acid (LPA). This enzyme utilizes acyl-phosphate as fatty acyl donor, but not acyl-CoA or acyl-ACP. The chain is Glycerol-3-phosphate acyltransferase from Campylobacter jejuni subsp. jejuni serotype O:23/36 (strain 81-176).